We begin with the raw amino-acid sequence, 91 residues long: Protein RacC (91 aa).

The polypeptide is Protein RacC (racC) (Escherichia coli (strain K12)).